A 244-amino-acid polypeptide reads, in one-letter code: NAD(P)H-hydrate epimerase (244 aa).

The 206-residue stretch at 35–240 (IREIDSLAME…SIGVPLELLR (206 aa)) folds into the YjeF N-terminal domain. 82–86 (NNGGD) contributes to the (6S)-NADPHX binding site. K(+)-binding residues include N83 and D150. (6S)-NADPHX is bound by residues 154 to 160 (GTGAKPP), Y165, and D183. T186 lines the K(+) pocket.

The protein belongs to the NnrE/AIBP family. It depends on K(+) as a cofactor.

The enzyme catalyses (6R)-NADHX = (6S)-NADHX. The catalysed reaction is (6R)-NADPHX = (6S)-NADPHX. Functionally, catalyzes the epimerization of the S- and R-forms of NAD(P)HX, a damaged form of NAD(P)H that is a result of enzymatic or heat-dependent hydration. This is a prerequisite for the S-specific NAD(P)H-hydrate dehydratase to allow the repair of both epimers of NAD(P)HX. The chain is NAD(P)H-hydrate epimerase from Rhodopirellula baltica (strain DSM 10527 / NCIMB 13988 / SH1).